The following is a 137-amino-acid chain: Large ribosomal subunit protein uL16c (137 aa).

It belongs to the universal ribosomal protein uL16 family. As to quaternary structure, part of the 50S ribosomal subunit.

The protein resides in the plastid. It is found in the chloroplast. The chain is Large ribosomal subunit protein uL16c from Vigna unguiculata (Cowpea).